The sequence spans 341 residues: Thiamine-phosphate synthase (341 aa).

The tract at residues 1–123 (MAVVEEQVVL…AAAAKEWRYR (123 aa)) is unknown. The interval 61-80 (AARDTPHDPGTGLEHPDEGV) is disordered. The interval 124-341 (VYTLESTATG…AWFLERLNRG (218 aa)) is thiamine-phosphate synthase. 4-amino-2-methyl-5-(diphosphooxymethyl)pyrimidine is bound by residues 171-175 (QLREK) and N203. Mg(2+) contacts are provided by D204 and D223. S242 is a 4-amino-2-methyl-5-(diphosphooxymethyl)pyrimidine binding site. 268–270 (TPT) is a 2-[(2R,5Z)-2-carboxy-4-methylthiazol-5(2H)-ylidene]ethyl phosphate binding site. 4-amino-2-methyl-5-(diphosphooxymethyl)pyrimidine is bound at residue K271. Position 298 (G298) interacts with 2-[(2R,5Z)-2-carboxy-4-methylthiazol-5(2H)-ylidene]ethyl phosphate.

The protein belongs to the thiamine-phosphate synthase family. Mg(2+) is required as a cofactor.

The enzyme catalyses 2-[(2R,5Z)-2-carboxy-4-methylthiazol-5(2H)-ylidene]ethyl phosphate + 4-amino-2-methyl-5-(diphosphooxymethyl)pyrimidine + 2 H(+) = thiamine phosphate + CO2 + diphosphate. It catalyses the reaction 2-(2-carboxy-4-methylthiazol-5-yl)ethyl phosphate + 4-amino-2-methyl-5-(diphosphooxymethyl)pyrimidine + 2 H(+) = thiamine phosphate + CO2 + diphosphate. The catalysed reaction is 4-methyl-5-(2-phosphooxyethyl)-thiazole + 4-amino-2-methyl-5-(diphosphooxymethyl)pyrimidine + H(+) = thiamine phosphate + diphosphate. Its pathway is cofactor biosynthesis; thiamine diphosphate biosynthesis; thiamine phosphate from 4-amino-2-methyl-5-diphosphomethylpyrimidine and 4-methyl-5-(2-phosphoethyl)-thiazole: step 1/1. Functionally, condenses 4-methyl-5-(beta-hydroxyethyl)thiazole monophosphate (THZ-P) and 2-methyl-4-amino-5-hydroxymethyl pyrimidine pyrophosphate (HMP-PP) to form thiamine monophosphate (TMP). The polypeptide is Thiamine-phosphate synthase (Gloeobacter violaceus (strain ATCC 29082 / PCC 7421)).